A 24-amino-acid chain; its full sequence is Aldehyde dehydrogenase gamma chain (24 aa).

In terms of assembly, heterotrimer composed of an alpha, a beta and a gamma chain. It depends on [2Fe-2S] cluster as a cofactor.

The enzyme catalyses an aldehyde + a quinone + H2O = a quinol + a carboxylate + H(+). The sequence is that of Aldehyde dehydrogenase gamma chain from Comamonas testosteroni (Pseudomonas testosteroni).